The following is a 636-amino-acid chain: Ketocytochalasin monooxygenase (636 aa).

FAD is bound by residues D125, 133-136 (TWYW), D145, Y151, and I195. NADP(+) is bound at residue 143-145 (ACD). NADP(+)-binding positions include 279–285 (TGASAVQ), 302–303 (RT), and 420–421 (KR). W534 is a binding site for FAD.

This sequence belongs to the FAD-binding monooxygenase family. It depends on FAD as a cofactor.

It carries out the reaction ketocytochalasin + NADPH + O2 + H(+) = iso-precytochalasin + NADP(+) + H2O. The enzyme catalyses iso-precytochalasin + NADPH + O2 + H(+) = cytochalasin Z16 + NADP(+) + H2O. The protein operates within mycotoxin biosynthesis. Its function is as follows. Ketocytochalasin monooxygenase; part of the gene cluster that mediates the biosynthesis of a family of the mycotoxins cytochalasins E and K. The hybrid PKS-NRPS synthetase ccsA and the enoyl reductase ccsC are responsible for fusion of phenylalanine with an octaketide backbone and subsequent release of the stable tetramic acid precursor. The polyketide synthase module (PKS) of the PKS-NRPS ccsA is responsible for the synthesis of the octaketide backbone. The downstream nonribosomal peptide synthetase (NRPS) amidates the carboxyl end of the octaketide with a phenylalanine. A reductase-like domain (R) at the C-terminus catalyzes the reductive release of the polyketide-amino acid intermediate. Because ccsA lacks a designated enoylreductase (ER) domain, the required activity is provided the enoyl reductase ccsC. Upon formation of the 11-membered carbocycle-fused perhydroisoindolone intermediate, a number of oxidative steps are required to afford the final cytochalasin E and K, including two hydroxylations at C17 and C18, one alcohol oxidation at C17, one epoxidation at C6 and C7 and two Baeyer-Villiger oxidations. The oxidative modification at C17, C18 and the C6-C7 epoxidation are likely to be catalyzed by the two cytochrome P450 oxygenases ccsD and ccsG. CcsD may be responsible for the epoxidation of the C6-C7 double bond. CcsG may be responsible for the successive oxidative modifications at C17 and C18. The double Baeyer-Villiger oxidations of ketocytochalasin to precytochalasin and cytochalasin Z(16) are among the final steps leading to cytochalasin E and K and are catalyzed by ccsB. The first oxygen insertion step follows that of the classic BVMO mechanism, generating the ester precytochalasin. Release of precytochalasin into an aqueous environment can generate the shunt product iso-precytochalasin through spontaneous isomerization. Alternatively, precytochalasin can undergo further oxidation by ccsB to yield the in-line carbonate-containing cytochalasin Z(16). Cytochalasin Z(16) is a precursor to cytochalasin E and cytochalasin K, whereas iso-precytochalasin is a precursor to cytochalasin Z(17) and rosellichalasin. The hydrolyase ccsE may catalyze hydrolysis of epoxide bond in cytochalasin E to afford cytochalasin K. The function of ccsF has not been assigned but it may play a role in post-PKS-NRPS biosynthetic step, resistance or transport of cytochalasins and related PKS-NRPS products. This is Ketocytochalasin monooxygenase from Aspergillus clavatus (strain ATCC 1007 / CBS 513.65 / DSM 816 / NCTC 3887 / NRRL 1 / QM 1276 / 107).